Consider the following 825-residue polypeptide: MDKQWFPAAGILLAALLVVSASTLTLLSTNEDPEQFPSAPGTSAQQSSRILLGILTDVTGGINSVEREPEALGRRAGGLSTEGAGGQESPSMPGPSGRVIPEPIPSALTTSASDMASQPVSSGADPIEEIMALGTLETITMSSPQPSPRHESEQKFDKVFRLCGTVPASETLEKNVASKPAWHLIKAPPPPIFSRSPHLLWCTPNSTVYIPVPAWRDGHSRPEASSSVPLAPSTSLGLPIFPWMPNILKATESLLPASPGRSGLDLTSQVGSRASENTVALDTGPVSRGTSVLLLPSATSPSQASSLHSPRPSSASPLSASPSPAALSFFPSPASILVLVSSVTTGASDSPKAPVSVIAPSTTDSFIKTSNLGPQIALQPSHPGLWLPTSPIHMPTLSLQHFSSPPSTAHSSGFTESSVHADPTLASTLPHPGQDMSLQDLSFSTGGRSHTTHSVTFRINSNRFTKAVWNLVPLERWLLNRLICYQLRFIYQEAFPNFRNVSTLLFRPGCPEVKASLIFGPPDPSSIEILWTLYRKVKSSRWSLGYLSLADHGLSSAGYSMTDLTQEIINISFTLMRPFLPQLLLPSSQSCILLEKQTIQLVTHEVSRFYKAELQSQPLLLFSNVKEWVSVYMEYKFKSPIPIRLQGLASHLAHHITDPTLQKSSIMANGEKADLVFYEMWLLILGHPFTKTLENKTSSECQELRGLLTRQLTSVLQPLKNFGQVVVEEFHQEPLTARVQTAFFGAVPAQAIIQDTVLQALGSLQETEGLQLEMLLPVLGTPSSRASRGPRGGAMLNLQRFTSLFVLVALCTAPPFINKQALYLS.

The signal sequence occupies residues 1-21; it reads MDKQWFPAAGILLAALLVVSA. Disordered stretches follow at residues 66-97 and 299-322; these read EREP…GPSG and TSPS…SASP. Positions 302–322 are enriched in low complexity; sequence SQASSLHSPRPSSASPLSASP.

In terms of tissue distribution, expression is restricted to circumvallate papillae.

This is Taste receptor cell protein 1 (Trcg1) from Mus musculus (Mouse).